The primary structure comprises 307 residues: Ubiquitin recognition factor in ER-associated degradation protein 1 (307 aa).

Position 1 is an N-acetylmethionine (methionine 1). A phosphoserine mark is found at serine 129, serine 231, serine 245, serine 247, and serine 299. 2 disordered regions span residues 231–256 (SGNR…DIKR) and 288–307 (GRFV…GRKP).

It belongs to the UFD1 family. In terms of assembly, heterodimer with NPLOC4, this heterodimer binds VCP and inhibits Golgi membrane fusion. Interacts with USP13. Interacts with ZFAND2B; probably through VCP. In terms of tissue distribution, found in adult heart, skeletal muscle and pancreas, and in fetal liver and kidney.

It is found in the nucleus. It localises to the cytoplasm. The protein resides in the cytosol. It participates in protein degradation; proteasomal ubiquitin-dependent pathway. Essential component of the ubiquitin-dependent proteolytic pathway which degrades ubiquitin fusion proteins. The ternary complex containing UFD1, VCP and NPLOC4 binds ubiquitinated proteins and is necessary for the export of misfolded proteins from the ER to the cytoplasm, where they are degraded by the proteasome. The NPLOC4-UFD1-VCP complex regulates spindle disassembly at the end of mitosis and is necessary for the formation of a closed nuclear envelope. It may be involved in the development of some ectoderm-derived structures. Acts as a negative regulator of type I interferon production via the complex formed with VCP and NPLOC4, which binds to RIGI and recruits RNF125 to promote ubiquitination and degradation of RIGI. The protein is Ubiquitin recognition factor in ER-associated degradation protein 1 of Homo sapiens (Human).